Reading from the N-terminus, the 165-residue chain is Probable bacterial non-heme ferritin-like protein (165 aa).

The 145-residue stretch at 1 to 145 folds into the Ferritin-like diiron domain; that stretch reads MLSENVVKLL…SILDKLNFLG (145 aa). Fe cation is bound by residues E17, E50, H53, E94, and Q127.

The protein belongs to the ferritin family. Prokaryotic subfamily.

Its subcellular location is the cytoplasm. The protein is Probable bacterial non-heme ferritin-like protein (ftnB) of Haemophilus influenzae (strain ATCC 51907 / DSM 11121 / KW20 / Rd).